The sequence spans 103 residues: ATP synthase subunit f, mitochondrial (103 aa).

The transit peptide at M1–Q6 directs the protein to the mitochondrion.

As to quaternary structure, F-type ATP synthases have 2 components, the catalytic core F(1) and the membrane-embedded component F(0), linked together by a central stalk and a peripheral stalk. The central stalk, also called rotor shaft, is often seen as part of F(1). The peripheral stalk is seen as part of F(0). F(0) contains the membrane channel next to the rotor. F-type ATP synthases form dimers but each monomer functions independently in ATP generation. The dimer consists of 17 different polypeptides: ATP1 (subunit alpha, 3 molecules per monomer, part of F(1)), ATP2 (subunit beta, 3 copies per monomer, part of F(1)), ATP3 (subunit gamma, part of the central stalk), ATP4 (subunit b, part of the peripheral stalk), ATP5/OSCP (subunit 5/OSCP, part of the peripheral stalk), ATP6 (subunit a, part of the peripheral stalk), ATP7 (subunit d, part of the peripheral stalk), ATP8 (subunit 8, part of the peripheral stalk), OLI1 (subunit c, part of the rotor, 10 molecules per monomer), ATP14 (subunit h, part of the peripheral stalk), ATP15 (subunit epsilon, part of the central stalk), ATP16 (subunit delta, part of the central stalk), ATP17 (subunit f, part of the peripheral stalk), ATP18 (subunit i/j, part of the peripheral stalk), ATP19 (subunit k, dimer-specific, at interface between monomers), ATP20 (subunit g, at interface between monomers), TIM11 (subunit e, at interface between monomers).

It is found in the mitochondrion inner membrane. Functionally, mitochondrial membrane ATP synthase (F(1)F(0) ATP synthase or Complex V) produces ATP from ADP in the presence of a proton gradient across the membrane which is generated by electron transport complexes of the respiratory chain. F-type ATP synthases consist of two structural domains, F(1) - containing the extramembraneous catalytic core, and F(0) - containing the membrane proton channel, linked together by a central stalk and a peripheral stalk. During catalysis, ATP synthesis in the catalytic domain of F(1) is coupled via a rotary mechanism of the central stalk subunits to proton translocation. Part of the complex F(0) domain. Minor subunit located with subunit a/ATP6 in the membrane. The polypeptide is ATP synthase subunit f, mitochondrial (Yarrowia lipolytica (strain CLIB 122 / E 150) (Yeast)).